The primary structure comprises 82 residues: Delta-conotoxin-like CnVIA (82 aa).

The first 22 residues, 1-22 (MKLTCMMIVAVLFLTAWTFVTA), serve as a signal peptide directing secretion. Positions 23–49 (DDSRNGLENLSPKARHEMKNPEASKSN) are excised as a propeptide. Intrachain disulfides connect C54–C69, C61–C73, and C68–C78.

Belongs to the conotoxin O1 superfamily. Expressed by the venom duct.

The protein localises to the secreted. In terms of biological role, delta-conotoxins bind to site 6 of voltage-gated sodium channels (Nav) and inhibit the inactivation process. The sequence is that of Delta-conotoxin-like CnVIA from Conus consors (Singed cone).